The chain runs to 492 residues: Dynein regulatory complex subunit 2 (492 aa).

3 coiled-coil regions span residues 16 to 95 (LTEE…FERV), 256 to 318 (VQSA…AAQA), and 373 to 401 (LSEEEQKQEKAKAMESSNEKLTQLMHDYS).

The protein belongs to the DRC2 family. Component of the nexin-dynein regulatory complex (N-DRC).

Its subcellular location is the cytoplasm. The protein resides in the cytoskeleton. The protein localises to the flagellum basal body. It is found in the cell projection. It localises to the cilium. Its subcellular location is the flagellum. The protein resides in the flagellum axoneme. In terms of biological role, component of the nexin-dynein regulatory complex (N-DRC), a key regulator of ciliary/flagellar motility which maintains the alignment and integrity of the distal axoneme and regulates microtubule sliding in motile axonemes. Plays a critical role in the assembly of N-DRC and also stabilizes the assembly of multiple inner dynein arms and radial spokes. Coassembles with DRC1 to form a central scaffold needed for assembly of the N-DRC and its attachment to the outer doublet microtubules. The sequence is that of Dynein regulatory complex subunit 2 (ccdc65) from Danio rerio (Zebrafish).